The primary structure comprises 1019 residues: Serine/threonine-protein kinase 31 (1019 aa).

The Tudor domain occupies 78 to 137 (NLDPNKIYGGLFSEDQCWYRCKVLKIISVEKCLVRYIDYGNTEILNRSDIVEIPLELQFS). A coiled-coil region spans residues 298 to 355 (EKIKQDQKLIEENEKLKTEKDALLESYKALELKVEQIAQELQQEKAAAVDLTNHLEYT). The Protein kinase domain maps to 710 to 1019 (IGLLKYMNSG…TRNGEANFDC (310 aa)). ATP is bound by residues 716–724 (MNSGGLLTM) and K737.

This sequence belongs to the protein kinase superfamily. Ser/Thr protein kinase family. Testis specific.

It carries out the reaction L-seryl-[protein] + ATP = O-phospho-L-seryl-[protein] + ADP + H(+). It catalyses the reaction L-threonyl-[protein] + ATP = O-phospho-L-threonyl-[protein] + ADP + H(+). The sequence is that of Serine/threonine-protein kinase 31 (STK31) from Homo sapiens (Human).